Reading from the N-terminus, the 310-residue chain is Aspartate carbamoyltransferase catalytic subunit (310 aa).

Residues arginine 55 and threonine 56 each coordinate carbamoyl phosphate. Lysine 85 is a binding site for L-aspartate. Positions 106, 135, and 138 each coordinate carbamoyl phosphate. Residues arginine 168 and arginine 230 each coordinate L-aspartate. Residues leucine 268 and proline 269 each coordinate carbamoyl phosphate.

Belongs to the aspartate/ornithine carbamoyltransferase superfamily. ATCase family. In terms of assembly, heterododecamer (2C3:3R2) of six catalytic PyrB chains organized as two trimers (C3), and six regulatory PyrI chains organized as three dimers (R2).

It catalyses the reaction carbamoyl phosphate + L-aspartate = N-carbamoyl-L-aspartate + phosphate + H(+). Its pathway is pyrimidine metabolism; UMP biosynthesis via de novo pathway; (S)-dihydroorotate from bicarbonate: step 2/3. Catalyzes the condensation of carbamoyl phosphate and aspartate to form carbamoyl aspartate and inorganic phosphate, the committed step in the de novo pyrimidine nucleotide biosynthesis pathway. This Buchnera aphidicola subsp. Acyrthosiphon pisum (strain 5A) protein is Aspartate carbamoyltransferase catalytic subunit.